A 586-amino-acid polypeptide reads, in one-letter code: Pyruvate kinase (586 aa).

A substrate-binding site is contributed by R32. Residues N34, S36, D66, and T67 each coordinate K(+). 34 to 37 lines the ATP pocket; sequence NFSH. 2 residues coordinate ATP: R73 and K156. E222 lines the Mg(2+) pocket. Substrate-binding residues include G245, D246, and T278. D246 provides a ligand contact to Mg(2+).

It belongs to the pyruvate kinase family. In the C-terminal section; belongs to the PEP-utilizing enzyme family. Requires Mg(2+) as cofactor. It depends on K(+) as a cofactor.

The catalysed reaction is pyruvate + ATP = phosphoenolpyruvate + ADP + H(+). It functions in the pathway carbohydrate degradation; glycolysis; pyruvate from D-glyceraldehyde 3-phosphate: step 5/5. This chain is Pyruvate kinase (pyk), found in Staphylococcus saprophyticus subsp. saprophyticus (strain ATCC 15305 / DSM 20229 / NCIMB 8711 / NCTC 7292 / S-41).